Here is a 250-residue protein sequence, read N- to C-terminus: DNA repair protein RecO (250 aa).

It belongs to the RecO family.

Involved in DNA repair and RecF pathway recombination. This is DNA repair protein RecO from Rhodopseudomonas palustris (strain TIE-1).